We begin with the raw amino-acid sequence, 1013 residues long: Sodium/potassium-transporting ATPase subunit alpha-3 (1013 aa).

Basic and acidic residues predominate over residues 1–10 (MGDKKDDKSS). The disordered stretch occupies residues 1–24 (MGDKKDDKSSPKKSKAKERRDLDD). At 1 to 77 (MGDKKDDKSS…NALTPPPTTP (77 aa)) the chain is on the cytoplasmic side. 2 positions are modified to phosphoserine: S37 and S56. The tract at residues 72 to 74 (PPP) is interaction with phosphoinositide-3 kinase. Residues 78–98 (EWVKFCRQLFGGFSILLWIGA) form a helical membrane-spanning segment. The Extracellular segment spans residues 99 to 121 (ILCFLAYGIQAGTEDDPSGDNLY). The helical transmembrane segment at 122 to 142 (LGIVLAAVVIITGCFSYYQEA) threads the bilayer. At 143–278 (KSSKIMESFK…VGKTPIAIEI (136 aa)) the chain is on the cytoplasmic side. Phosphoserine is present on residues S218 and S265. The chain crosses the membrane as a helical span at residues 279-298 (EHFIQLITGVAVFLGVSFFI). Residues 299-310 (LSLILGYTWLEA) are Extracellular-facing. Residues 311–328 (VIFLIGIIVANVPEGLLA) form a helical membrane-spanning segment. Topologically, residues 329-762 (TVTVCLTLTA…EEGRLIFDNL (434 aa)) are cytoplasmic. D366 acts as the 4-aspartylphosphate intermediate in catalysis. Position 442 is a phosphoserine (S442). Y548 bears the Phosphotyrosine mark. Mg(2+) contacts are provided by D707 and D711. Residues 763–782 (KKSIAYTLTSNIPEITPFLL) form a helical membrane-spanning segment. Over 783 to 792 (FIMANIPLPL) the chain is Extracellular. The chain crosses the membrane as a helical span at residues 793 to 813 (GTITILCIDLGTDMVPAISLA). Topologically, residues 814-833 (YEAAESDIMKRQPRNPRTDK) are cytoplasmic. The chain crosses the membrane as a helical span at residues 834 to 856 (LVNERLISMAYGQIGMIQALGGF). The Extracellular portion of the chain corresponds to 857–908 (FSYFVILAENGFLPGNLVGIRLNWDDRTVNDLEDSYGQQWTYEQRKVVEFTC). Residues 909–928 (HTAFFVSIVVVQWADLIICK) form a helical membrane-spanning segment. Residues 929-941 (TRRNSVFQQGMKN) are Cytoplasmic-facing. Residue S933 is modified to Phosphoserine; by PKA. The chain crosses the membrane as a helical span at residues 942 to 960 (KILIFGLFEETALAAFLSY). Residues 961–975 (CPGMDVALRMYPLKP) are Extracellular-facing. Residues 976–996 (SWWFCAFPYSFLIFVYDEIRK) form a helical membrane-spanning segment. The Cytoplasmic portion of the chain corresponds to 997 to 1013 (LILRRNPGGWVEKETYY).

Belongs to the cation transport ATPase (P-type) (TC 3.A.3) family. Type IIC subfamily. The sodium/potassium-transporting ATPase is composed of a catalytic alpha subunit, an auxiliary non-catalytic beta subunit and an additional regulatory subunit. Interacts with regulatory subunit FXYD1.

The protein resides in the cell membrane. The catalysed reaction is K(+)(out) + Na(+)(in) + ATP + H2O = K(+)(in) + Na(+)(out) + ADP + phosphate + H(+). In terms of biological role, this is the catalytic component of the active enzyme, which catalyzes the hydrolysis of ATP coupled with the exchange of sodium and potassium ions across the plasma membrane. This action creates the electrochemical gradient of sodium and potassium ions, providing the energy for active transport of various nutrients. This Mus musculus (Mouse) protein is Sodium/potassium-transporting ATPase subunit alpha-3 (Atp1a3).